The following is a 294-amino-acid chain: Ribosomal protein L11 methyltransferase (294 aa).

Residues Thr145, Gly166, Asp188, and Asn227 each contribute to the S-adenosyl-L-methionine site.

This sequence belongs to the methyltransferase superfamily. PrmA family.

The protein resides in the cytoplasm. It carries out the reaction L-lysyl-[protein] + 3 S-adenosyl-L-methionine = N(6),N(6),N(6)-trimethyl-L-lysyl-[protein] + 3 S-adenosyl-L-homocysteine + 3 H(+). Its function is as follows. Methylates ribosomal protein L11. In Hydrogenovibrio crunogenus (strain DSM 25203 / XCL-2) (Thiomicrospira crunogena), this protein is Ribosomal protein L11 methyltransferase.